The primary structure comprises 285 residues: NAD kinase (285 aa).

Aspartate 66 acts as the Proton acceptor in catalysis. NAD(+)-binding positions include 66–67 (DG), 137–138 (ND), arginine 148, arginine 165, aspartate 167, and 178–183 (TAYSMS).

This sequence belongs to the NAD kinase family. Requires a divalent metal cation as cofactor.

Its subcellular location is the cytoplasm. The enzyme catalyses NAD(+) + ATP = ADP + NADP(+) + H(+). Involved in the regulation of the intracellular balance of NAD and NADP, and is a key enzyme in the biosynthesis of NADP. Catalyzes specifically the phosphorylation on 2'-hydroxyl of the adenosine moiety of NAD to yield NADP. This chain is NAD kinase, found in Chlorobium phaeobacteroides (strain DSM 266 / SMG 266 / 2430).